The primary structure comprises 432 residues: Glutamyl-tRNA reductase (432 aa).

Substrate is bound by residues 49–52 (TCNR), serine 101, 106–108 (ESQ), and glutamine 112. Cysteine 50 functions as the Nucleophile in the catalytic mechanism. Position 181-186 (181-186 (GAGETI)) interacts with NADP(+). The interval 410-432 (KPGYHHPTLQTTIVKTDETDPAS) is disordered.

It belongs to the glutamyl-tRNA reductase family. In terms of assembly, homodimer.

It carries out the reaction (S)-4-amino-5-oxopentanoate + tRNA(Glu) + NADP(+) = L-glutamyl-tRNA(Glu) + NADPH + H(+). Its pathway is porphyrin-containing compound metabolism; protoporphyrin-IX biosynthesis; 5-aminolevulinate from L-glutamyl-tRNA(Glu): step 1/2. Catalyzes the NADPH-dependent reduction of glutamyl-tRNA(Glu) to glutamate 1-semialdehyde (GSA). The protein is Glutamyl-tRNA reductase of Xylella fastidiosa (strain M23).